Here is a 338-residue protein sequence, read N- to C-terminus: Phenylalanine--tRNA ligase alpha subunit (338 aa).

A Mg(2+)-binding site is contributed by E253.

The protein belongs to the class-II aminoacyl-tRNA synthetase family. Phe-tRNA synthetase alpha subunit type 1 subfamily. In terms of assembly, tetramer of two alpha and two beta subunits. It depends on Mg(2+) as a cofactor.

It is found in the cytoplasm. It carries out the reaction tRNA(Phe) + L-phenylalanine + ATP = L-phenylalanyl-tRNA(Phe) + AMP + diphosphate + H(+). In Syntrophus aciditrophicus (strain SB), this protein is Phenylalanine--tRNA ligase alpha subunit.